We begin with the raw amino-acid sequence, 883 residues long: Pre-mRNA-splicing factor syf1 homolog (883 aa).

12 HAT repeats span residues 13–45 (INFE…HKAK), 46–78 (APNN…TRRK), 88–120 (PMYE…FMTS), 122–156 (CKIT…FVRR), 158–190 (EMPE…EADR), 268–303 (GLFD…FEEL), 368–406 (DKPA…FYEA), 463–495 (KRKI…LEES), 531–565 (NYFE…KFLE), 570–604 (TKLE…LEEE), 642–676 (YGLP…LETK), and 678–712 (GEVD…FEVR). Disordered stretches follow at residues 794 to 851 (RGET…DEEG) and 864 to 883 (IPAK…SDGE). Positions 812–834 (DEIDIGDSDEDDEEEDDDEENEM) are enriched in acidic residues. Polar residues-rich tracts occupy residues 835–844 (TNENQASAAV) and 873–883 (KPSNQGDSDGE).

This sequence belongs to the crooked-neck family. Component of the NTC(Nineteen)/Prp19 complex composed of at least fand, Prp19,CG9667/ISY1 and Cdc5/CDC5L. Within the complex, interacts with Prp19 and ISY1/CG9667.

The protein localises to the nucleus. In terms of biological role, subunit of the NTC(Nineteen)/Prp19 complex, which is part of the spliceosome. The complex participates in spliceosome assembly, its remodeling and is required for efficient spliceosome activation. Essential for efficient pre-mRNA splicing. In embryos, efficient pre-mRNA splicing of zygotic transcripts is essential during dynamic cellular processes that require rapid division and/or dramatic changes in gene expression such as blastoderm cellularization, tracheal branching morphogenesis, Malpighian morphogenesis and epidermal development. Part of its role in promoting embryo tracheal development is also due to specifically splicing bnl transcripts which results in the activation of the BNL-FGF pathway. In Drosophila melanogaster (Fruit fly), this protein is Pre-mRNA-splicing factor syf1 homolog.